Reading from the N-terminus, the 66-residue chain is MDVRNCSFCGKSIEPASGFLYVRKDGSVLNFCSRKCKENMVKLKRVPRKVKWTNEYHRIKAMTKKA.

Positions 6, 9, 32, and 36 each coordinate Zn(2+). Residues 6–36 (CSFCGKSIEPASGFLYVRKDGSVLNFCSRKC) form a C4-type zinc finger.

This sequence belongs to the eukaryotic ribosomal protein eL24 family. Part of the 50S ribosomal subunit. Forms a cluster with proteins L3 and L14. The cofactor is Zn(2+).

Binds to the 23S rRNA. The sequence is that of Large ribosomal subunit protein eL24 from Picrophilus torridus (strain ATCC 700027 / DSM 9790 / JCM 10055 / NBRC 100828 / KAW 2/3).